Consider the following 155-residue polypeptide: Protein PtsT (155 aa).

This chain is Protein PtsT (ptsT), found in Geobacillus stearothermophilus (Bacillus stearothermophilus).